The sequence spans 83 residues: Defensin-1 (83 aa).

A signal peptide spans 1 to 33; that stretch reads MAGKGVGSRLSTLFLLVLLVITIGMMQVQVAEG. 4 cysteine pairs are disulfide-bonded: cysteine 36-cysteine 82, cysteine 47-cysteine 67, cysteine 53-cysteine 76, and cysteine 57-cysteine 78.

The protein belongs to the DEFL family.

The protein resides in the secreted. Functionally, plant defense peptide. Has antifungal activity against B.cinera, F.oxysporum, F.solani and H.annosum with IC(50) values of 0.4 ug/ml, 2.9 ug/ml, 0.9 ug/ml and 1.4 ug/ml, respectively. Has modest antifungal activity against C.albicans and T.reesei. Causes thickening of F.oxysporum hyphae and an increase in their branching. Lacks antibacterial activity against the Gram-negative bacteria E.coli and E.carotovora. The chain is Defensin-1 from Pinus sylvestris (Scotch pine).